Consider the following 1184-residue polypeptide: Protein stu1 (1184 aa).

2 HEAT repeats span residues Phe-92–Val-130 and Arg-162–Ala-194. Basic and acidic residues-rich tracts occupy residues Ser-229 to Pro-240 and Glu-308 to Thr-317. Residues Ser-229 to Ser-336 form a disordered region. Residues Val-463 to Gln-499 form an HEAT 3 repeat. Disordered stretches follow at residues Leu-564–Leu-584 and Ala-602–Glu-906. A compositionally biased stretch (polar residues) spans Asn-572–Leu-584. Residues Ala-640–Pro-649 show a composition bias toward low complexity. Over residues Ser-723–Ala-737 the composition is skewed to polar residues. Composition is skewed to basic and acidic residues over residues Ala-787–Leu-811 and Glu-882–Glu-895.

It belongs to the CLASP family. As to quaternary structure, interacts with microtubules.

It is found in the cytoplasm. The protein localises to the cytoskeleton. It localises to the nucleus. The protein resides in the spindle. Functionally, microtubule binding protein that promotes the stabilization of dynamic microtubules. Required for mitotic spindle formation. The protein is Protein stu1 (stu1) of Aspergillus oryzae (strain ATCC 42149 / RIB 40) (Yellow koji mold).